The chain runs to 350 residues: Protein TRIGALACTOSYLDIACYLGLYCEROL 1, chloroplastic (350 aa).

Positions 67–86 are disordered; sequence SMSMLEEETSTENNAPSQEA. Residues 98–117 form a helical membrane-spanning segment; it reads YIWRGLSVPIIAGQVVLRIL. Over 118-136 the chain is Stromal; it reads KGKIHWRNTLQQLERTGPK. Residues 137 to 157 form a helical membrane-spanning segment; it reads SLGVCLLTSTFVGMAFTIQFV. Topologically, residues 158–168 are chloroplast intermembrane; the sequence is REFTRLGLNRS. A helical transmembrane segment spans residues 169 to 189; sequence IGGVLALAFSRELSPVITSIV. The Stromal portion of the chain corresponds to 190–229; it reads VAGRMGSAFAAELGTMQVSEQTDTLRVLGADPIDYLITPR. A helical membrane pass occupies residues 230–250; it reads VIASCLALPFLTLMCFTVGMA. Residues 251-288 lie on the Chloroplast intermembrane side of the membrane; it reads SSALLSDAVYGISINIIMDSAHRALRPWDIVSAMIKSQ. The chain crosses the membrane as a helical span at residues 289–309; sequence VFGAIISVISCSWGVTTTGGA. Over 310–318 the chain is Stromal; it reads KGVGESTTS. A helical transmembrane segment spans residues 319–339; sequence AVVMSLVGIFIADFVLSSFFF. The Chloroplast intermembrane portion of the chain corresponds to 340-350; sequence QGAGDSLKNCV.

It belongs to the MlaE permease family. As to quaternary structure, permease subunit of the TGD complex, a lipid translocator at the inner chloroplast envelope membrane made of TGD1, TGD2 and TGD3. Interacts with TGD2 and TGD3 with an overall subunit stoichiometry of 2 TGD1, 2 TGD3 and 8 to 12 TGD2. Interacts with TGD5. In terms of tissue distribution, high levels in green tissues, but low levels in nongreen tissues such as roots.

It is found in the plastid. It localises to the chloroplast inner membrane. Its function is as follows. Required during embryogenesis. Permease involved in lipid transfer from the endoplasmic reticulum (ER) to plastids, and necessary for thylakoids formation. The sequence is that of Protein TRIGALACTOSYLDIACYLGLYCEROL 1, chloroplastic from Arabidopsis thaliana (Mouse-ear cress).